A 1234-amino-acid chain; its full sequence is PAN2-PAN3 deadenylation complex catalytic subunit PAN2 (1234 aa).

The segment at 12–32 is disordered; that stretch reads LKNSNNNSNSNSSSNNSSNGV. Over residues 14 to 30 the composition is skewed to low complexity; it reads NSNNNSNSNSSSNNSSN. 3 WD repeats span residues 176-213, 272-315, and 342-381; these read NHTG…SIKT, AFPA…VYHA, and QQQP…TLSK. The segment at 323 to 346 is disordered; that stretch reads PLPPAGSSAAQQQKQQQQQQQQPH. The span at 333–344 shows a compositional bias: low complexity; sequence QQQKQQQQQQQQ. A linker region spans residues 383–537; it reads FVNFPQEIER…DSIFQCQNDE (155 aa). The 409-residue stretch at 538–946 folds into the USP domain; the sequence is KIPNCYSRLQ…KPVIVIYQEV (409 aa). The segment at 751–775 is disordered; the sequence is PNTQQDQQQQQQQQQQQQQQQQPTN. Positions 754-772 are enriched in low complexity; sequence QQDQQQQQQQQQQQQQQQQ. Residues D1004, E1006, D1138, and D1191 each coordinate a divalent metal cation. Positions 1072–1199 constitute an Exonuclease domain; sequence GEAFIDDYIV…EDARTALLLY (128 aa).

It belongs to the peptidase C19 family. PAN2 subfamily. As to quaternary structure, forms a heterotrimer with an asymmetric homodimer of the regulatory subunit PAN3 to form the poly(A)-nuclease (PAN) deadenylation complex. The cofactor is a divalent metal cation.

Its subcellular location is the cytoplasm. It carries out the reaction Exonucleolytic cleavage of poly(A) to 5'-AMP.. Positively regulated by the regulatory subunit PAN3. In terms of biological role, catalytic subunit of the poly(A)-nuclease (PAN) deadenylation complex, one of two cytoplasmic mRNA deadenylases involved in mRNA turnover. PAN specifically shortens poly(A) tails of RNA and the activity is stimulated by poly(A)-binding protein PAB1. PAN deadenylation is followed by rapid degradation of the shortened mRNA tails by the CCR4-NOT complex. Deadenylated mRNAs are then degraded by two alternative mechanisms, namely exosome-mediated 3'-5' exonucleolytic degradation, or deadenylation-dependent mRNA decaping and subsequent 5'-3' exonucleolytic degradation by XRN1. May also be involved in post-transcriptional maturation of mRNA poly(A) tails. This chain is PAN2-PAN3 deadenylation complex catalytic subunit PAN2, found in Lodderomyces elongisporus (strain ATCC 11503 / CBS 2605 / JCM 1781 / NBRC 1676 / NRRL YB-4239) (Yeast).